Consider the following 482-residue polypeptide: Glutamyl-tRNA(Gln) amidotransferase subunit A (482 aa).

Residues Lys74 and Ser149 each act as charge relay system in the active site. Ser173 acts as the Acyl-ester intermediate in catalysis.

Belongs to the amidase family. GatA subfamily. Heterotrimer of A, B and C subunits.

The catalysed reaction is L-glutamyl-tRNA(Gln) + L-glutamine + ATP + H2O = L-glutaminyl-tRNA(Gln) + L-glutamate + ADP + phosphate + H(+). Functionally, allows the formation of correctly charged Gln-tRNA(Gln) through the transamidation of misacylated Glu-tRNA(Gln) in organisms which lack glutaminyl-tRNA synthetase. The reaction takes place in the presence of glutamine and ATP through an activated gamma-phospho-Glu-tRNA(Gln). The sequence is that of Glutamyl-tRNA(Gln) amidotransferase subunit A from Prochlorococcus marinus (strain MIT 9215).